A 431-amino-acid polypeptide reads, in one-letter code: UDP-N-acetylmuramate--L-alanine ligase (431 aa).

108 to 114 is a binding site for ATP; that stretch reads GAHGKST.

It belongs to the MurCDEF family.

The protein resides in the cytoplasm. It catalyses the reaction UDP-N-acetyl-alpha-D-muramate + L-alanine + ATP = UDP-N-acetyl-alpha-D-muramoyl-L-alanine + ADP + phosphate + H(+). The protein operates within cell wall biogenesis; peptidoglycan biosynthesis. Cell wall formation. This Campylobacter jejuni (strain RM1221) protein is UDP-N-acetylmuramate--L-alanine ligase.